The chain runs to 144 residues: Large ribosomal subunit protein uL15 (144 aa).

The interval 1–48 is disordered; it reads MIKLEYLQDPSPRKRRTKLLGRGPSSGHGKTSGRGHKGDGSRSGYKRR.

It belongs to the universal ribosomal protein uL15 family. Part of the 50S ribosomal subunit.

Functionally, binds to the 23S rRNA. The protein is Large ribosomal subunit protein uL15 of Chlamydia muridarum (strain MoPn / Nigg).